A 103-amino-acid polypeptide reads, in one-letter code: Muscarinic toxin BM14 (103 aa).

The first 21 residues, 1–21 (MKTLLLTLVVVTIICLDLGYT), serve as a signal peptide directing secretion. Disulfide bonds link C24–C45, C27–C37, C38–C72, C76–C90, and C91–C96.

Belongs to the three-finger toxin family. Ancestral subfamily. Orphan group XVII sub-subfamily. As to expression, expressed by the venom gland.

It is found in the secreted. Its function is as follows. This toxin inhibits the binding of [3H]quinuclidinyl benzilate to the M2 muscarinic acetylcholine (mAchR) receptor subtype (CHRM2). This chain is Muscarinic toxin BM14, found in Bungarus multicinctus (Many-banded krait).